The chain runs to 540 residues: Chaperonin GroEL (540 aa).

Residues 29–32 (TLGP), 86–90 (DGTTT), G413, 477–479 (DAL), and D493 each bind ATP.

Belongs to the chaperonin (HSP60) family. In terms of assembly, forms a cylinder of 14 subunits composed of two heptameric rings stacked back-to-back. Interacts with the co-chaperonin GroES.

The protein localises to the cytoplasm. It carries out the reaction ATP + H2O + a folded polypeptide = ADP + phosphate + an unfolded polypeptide.. In terms of biological role, together with its co-chaperonin GroES, plays an essential role in assisting protein folding. The GroEL-GroES system forms a nano-cage that allows encapsulation of the non-native substrate proteins and provides a physical environment optimized to promote and accelerate protein folding. The chain is Chaperonin GroEL from Clostridium botulinum (strain Eklund 17B / Type B).